We begin with the raw amino-acid sequence, 135 residues long: Ribosome-binding factor A (135 aa).

Belongs to the RbfA family. As to quaternary structure, monomer. Binds 30S ribosomal subunits, but not 50S ribosomal subunits or 70S ribosomes.

The protein resides in the cytoplasm. In terms of biological role, one of several proteins that assist in the late maturation steps of the functional core of the 30S ribosomal subunit. Associates with free 30S ribosomal subunits (but not with 30S subunits that are part of 70S ribosomes or polysomes). Required for efficient processing of 16S rRNA. May interact with the 5'-terminal helix region of 16S rRNA. The sequence is that of Ribosome-binding factor A from Bartonella henselae (strain ATCC 49882 / DSM 28221 / CCUG 30454 / Houston 1) (Rochalimaea henselae).